Consider the following 285-residue polypeptide: RNase adapter protein RapZ (285 aa).

An ATP-binding site is contributed by Gly8–Ser15. GTP is bound at residue Asp56–Asn59. Residues Arg266–Ser285 are RNA-binding.

Belongs to the RapZ-like family. RapZ subfamily. As to quaternary structure, homotrimer.

Its function is as follows. Modulates the synthesis of GlmS, by affecting the processing and stability of the regulatory small RNA GlmZ. When glucosamine-6-phosphate (GlcN6P) concentrations are high in the cell, RapZ binds GlmZ and targets it to cleavage by RNase E. Consequently, GlmZ is inactivated and unable to activate GlmS synthesis. Under low GlcN6P concentrations, RapZ is sequestered and inactivated by an other regulatory small RNA, GlmY, preventing GlmZ degradation and leading to synthesis of GlmS. This is RNase adapter protein RapZ from Pectobacterium atrosepticum (strain SCRI 1043 / ATCC BAA-672) (Erwinia carotovora subsp. atroseptica).